The primary structure comprises 275 residues: Phosphonoacetaldehyde hydrolase (275 aa).

Residue aspartate 15 is the Nucleophile of the active site. Mg(2+)-binding residues include aspartate 15 and alanine 17. Lysine 56 serves as the catalytic Schiff-base intermediate with substrate. Position 189 (aspartate 189) interacts with Mg(2+).

It belongs to the HAD-like hydrolase superfamily. PhnX family. In terms of assembly, homodimer. Requires Mg(2+) as cofactor.

The catalysed reaction is phosphonoacetaldehyde + H2O = acetaldehyde + phosphate + H(+). In terms of biological role, involved in phosphonate degradation. The polypeptide is Phosphonoacetaldehyde hydrolase (Pseudomonas fluorescens (strain Pf0-1)).